The following is a 603-amino-acid chain: ATP-dependent zinc metalloprotease FtsH (603 aa).

The Stromal segment spans residues 1–2; the sequence is MK. A helical membrane pass occupies residues 3-23; that stretch reads NLWIWSLPLIVLAFIGWQELA. The Lumenal portion of the chain corresponds to 24-101; the sequence is NQMPVATSRM…DVDVHAVSNW (78 aa). A helical transmembrane segment spans residues 102-122; that stretch reads INVASNWIIPLIIIGVVIWLL. The Stromal segment spans residues 123–603; it reads SRSASSNTTG…SQAARLTAVN (481 aa). 194–201 is a binding site for ATP; the sequence is GPPGTGKT. H415 lines the Zn(2+) pocket. Residue E416 is part of the active site. Residues H419 and D493 each contribute to the Zn(2+) site.

This sequence in the central section; belongs to the AAA ATPase family. It in the C-terminal section; belongs to the peptidase M41 family. In terms of assembly, homohexamer. Zn(2+) is required as a cofactor.

It is found in the plastid. The protein localises to the chloroplast thylakoid membrane. Functionally, acts as a processive, ATP-dependent zinc metallopeptidase. This Cyanidioschyzon merolae (strain NIES-3377 / 10D) (Unicellular red alga) protein is ATP-dependent zinc metalloprotease FtsH.